The primary structure comprises 465 residues: 6-phospho-beta-glucosidase (465 aa).

Catalysis depends on Glu-173, which acts as the Proton donor. Residue Glu-362 is the Nucleophile of the active site.

This sequence belongs to the glycosyl hydrolase 1 family.

The enzyme catalyses 6-phospho-beta-D-glucosyl-(1-&gt;4)-D-glucose + H2O = D-glucose 6-phosphate + D-glucose. It participates in carbohydrate metabolism; beta-glucoside metabolism. In Dickeya chrysanthemi (Pectobacterium chrysanthemi), this protein is 6-phospho-beta-glucosidase (arbB).